Reading from the N-terminus, the 214-residue chain is Cytochrome c biogenesis ATP-binding export protein CcmA (214 aa).

One can recognise an ABC transporter domain in the interval 16-212 (LRVSGLSLSR…PDAKRIDLGA (197 aa)). Position 48–55 (48–55 (GPNGTGKT)) interacts with ATP.

The protein belongs to the ABC transporter superfamily. CcmA exporter (TC 3.A.1.107) family. In terms of assembly, the complex is composed of two ATP-binding proteins (CcmA) and two transmembrane proteins (CcmB).

The protein resides in the cell inner membrane. The catalysed reaction is heme b(in) + ATP + H2O = heme b(out) + ADP + phosphate + H(+). In terms of biological role, part of the ABC transporter complex CcmAB involved in the biogenesis of c-type cytochromes; once thought to export heme, this seems not to be the case, but its exact role is uncertain. Responsible for energy coupling to the transport system. The protein is Cytochrome c biogenesis ATP-binding export protein CcmA of Maricaulis maris (strain MCS10) (Caulobacter maris).